We begin with the raw amino-acid sequence, 283 residues long: Pantothenate synthetase (283 aa).

30–37 (MGNLHSGH) serves as a coordination point for ATP. The active-site Proton donor is the histidine 37. Position 61 (glutamine 61) interacts with (R)-pantoate. Residue glutamine 61 participates in beta-alanine binding. Residue 149–152 (GQKD) coordinates ATP. Glutamine 155 is a (R)-pantoate binding site. Residues valine 178 and 186–189 (LSSR) contribute to the ATP site.

It belongs to the pantothenate synthetase family. Homodimer.

It localises to the cytoplasm. The catalysed reaction is (R)-pantoate + beta-alanine + ATP = (R)-pantothenate + AMP + diphosphate + H(+). It functions in the pathway cofactor biosynthesis; (R)-pantothenate biosynthesis; (R)-pantothenate from (R)-pantoate and beta-alanine: step 1/1. Catalyzes the condensation of pantoate with beta-alanine in an ATP-dependent reaction via a pantoyl-adenylate intermediate. This is Pantothenate synthetase from Pseudomonas fluorescens (strain SBW25).